The chain runs to 176 residues: Disulfide bond formation protein B (176 aa).

Residues 1 to 14 are Cytoplasmic-facing; it reads MLQFLNRCSRGRGA. A helical membrane pass occupies residues 15 to 31; sequence WLLMALTAFLLELTALY. Residues 32-49 lie on the Periplasmic side of the membrane; it reads FQHIMLLQPCVMCIYERV. C41 and C44 are disulfide-bonded. The chain crosses the membrane as a helical span at residues 50-65; it reads ALFGILGASLLGAIAP. The Cytoplasmic segment spans residues 66-71; the sequence is RSPLRY. A helical membrane pass occupies residues 72 to 89; it reads LAIAVWIYSAWKGVQLAW. The Periplasmic segment spans residues 90 to 144; it reads AHTMLQLNPSPFNTCDFFVNFPSWLPLDKWLPAVFAASGDCSERQWQFMSLEMPQ. C104 and C130 form a disulfide bridge. Residues 145–163 form a helical membrane-spanning segment; that stretch reads WLVGIFAAYLVIAVLVLIS. Over 164 to 176 the chain is Cytoplasmic; sequence QFVKPKRRDLFGR.

It belongs to the DsbB family.

Its subcellular location is the cell inner membrane. Required for disulfide bond formation in some periplasmic proteins. Acts by oxidizing the DsbA protein. The polypeptide is Disulfide bond formation protein B (Yersinia pestis bv. Antiqua (strain Nepal516)).